The primary structure comprises 223 residues: Alpha-S2-casein (223 aa).

Residues 1–15 (MKLFIFTCLLAVALA) form the signal peptide. 8 positions are modified to phosphoserine: Ser23, Ser24, Ser25, Ser28, Ser46, Ser71, Ser72, and Ser73. Repeats lie at residues 76–128 (FADI…TLGK) and 129–223 (EQIS…ERQA). Residues Ser132, Ser147, and Ser155 each carry the phosphoserine modification.

This sequence belongs to the alpha-casein family. As to expression, mammary gland specific. Secreted in milk.

It is found in the secreted. Functionally, important role in the capacity of milk to transport calcium phosphate. The protein is Alpha-S2-casein (CSN1S2) of Cavia porcellus (Guinea pig).